The following is a 381-amino-acid chain: Probable glucuronosyltransferase Os04g0103100 (381 aa).

At 1-69 the chain is on the cytoplasmic side; it reads MASIRRPHSP…HTSFRRPLPR (69 aa). The interval 21–50 is disordered; that stretch reads HLGPFASSSPPSSPLRHSSSSSSPRSAAHH. The segment covering 26–46 has biased composition (low complexity); the sequence is ASSSPPSSPLRHSSSSSSPRS. The helical; Signal-anchor for type II membrane protein transmembrane segment at 70–90 threads the bilayer; it reads FAAFFLLGSFLGLLHFLSHLP. Over 91–381 the chain is Lumenal; that stretch reads RPLGPIPNPN…TDLDVIIPLK (291 aa). The tract at residues 96 to 122 is disordered; it reads IPNPNSHHRHRDPFPILQHPHPPSTPH. Asparagine 194 and asparagine 296 each carry an N-linked (GlcNAc...) asparagine glycan.

It belongs to the glycosyltransferase 43 family.

The protein localises to the golgi apparatus membrane. Functionally, involved in the synthesis of glucuronoxylan hemicellulose in secondary cell walls. This chain is Probable glucuronosyltransferase Os04g0103100, found in Oryza sativa subsp. japonica (Rice).